Here is a 292-residue protein sequence, read N- to C-terminus: 1,4-dihydroxy-2-naphthoate octaprenyltransferase (292 aa).

6 helical membrane-spanning segments follow: residues 35 to 55 (AAVW…VIGV), 101 to 121 (ALAG…VGAI), 137 to 157 (GYAG…AVLG), 166 to 186 (VDWV…SVLV), 220 to 240 (LLAV…WCVV), and 271 to 291 (TGLA…FGQL).

The protein belongs to the MenA family. Type 1 subfamily. Mg(2+) is required as a cofactor.

The protein resides in the cell membrane. The catalysed reaction is an all-trans-polyprenyl diphosphate + 1,4-dihydroxy-2-naphthoate + H(+) = a 2-demethylmenaquinol + CO2 + diphosphate. It participates in quinol/quinone metabolism; menaquinone biosynthesis; menaquinol from 1,4-dihydroxy-2-naphthoate: step 1/2. With respect to regulation, activity is abolished by EDTA. Inhibited by Ro 48-8071, which is non-competitive with regard to DHNA and competitive with regard to the isoprenyldiphosphate substrate. Its function is as follows. Conversion of 1,4-dihydroxy-2-naphthoate (DHNA) to demethylmenaquinone (DMK). Can use a variety of allylic isoprenyl diphosphates as substrates but has a requirement for at least three isoprene units. The chain is 1,4-dihydroxy-2-naphthoate octaprenyltransferase from Mycobacterium tuberculosis (strain ATCC 25618 / H37Rv).